The following is a 473-amino-acid chain: Photosystem II CP43 reaction center protein (473 aa).

The propeptide occupies 1-14 (MKILYSLRRFYHVE). Thr-15 carries the post-translational modification N-acetylthreonine. Thr-15 carries the phosphothreonine modification. The next 5 membrane-spanning stretches (helical) occupy residues 69 to 93 (LFEV…PHLA), 134 to 155 (LLGP…KDRN), 178 to 200 (KALY…RKIT), 255 to 275 (KPFA…LSYS), and 291 to 312 (WFNN…ASQA). Residue Glu-367 coordinates [CaMn4O5] cluster. The chain crosses the membrane as a helical span at residues 447–471 (RARAAAAGFEKGIDRDLEPVLYMTP).

This sequence belongs to the PsbB/PsbC family. PsbC subfamily. As to quaternary structure, PSII is composed of 1 copy each of membrane proteins PsbA, PsbB, PsbC, PsbD, PsbE, PsbF, PsbH, PsbI, PsbJ, PsbK, PsbL, PsbM, PsbT, PsbX, PsbY, PsbZ, Psb30/Ycf12, at least 3 peripheral proteins of the oxygen-evolving complex and a large number of cofactors. It forms dimeric complexes. Binds multiple chlorophylls and provides some of the ligands for the Ca-4Mn-5O cluster of the oxygen-evolving complex. It may also provide a ligand for a Cl- that is required for oxygen evolution. PSII binds additional chlorophylls, carotenoids and specific lipids. serves as cofactor.

The protein localises to the plastid. It localises to the chloroplast thylakoid membrane. In terms of biological role, one of the components of the core complex of photosystem II (PSII). It binds chlorophyll and helps catalyze the primary light-induced photochemical processes of PSII. PSII is a light-driven water:plastoquinone oxidoreductase, using light energy to abstract electrons from H(2)O, generating O(2) and a proton gradient subsequently used for ATP formation. In Saccharum hybrid (Sugarcane), this protein is Photosystem II CP43 reaction center protein.